An 89-amino-acid polypeptide reads, in one-letter code: MAEENIIFVGKKPTMNYVLAVVTQFNNNANKIIIKARGKTISKAVDVAEITRHKFIPDAKYEEIRLDTETLQGERGSSNVSSIEITLSR.

N6-acetyllysine is present on Lys-11.

The protein belongs to the histone-like Alba family. In terms of processing, acetylated. Acetylation at Lys-11 decreases DNA-binding affinity.

It is found in the cytoplasm. Its subcellular location is the chromosome. Functionally, binds double-stranded DNA tightly but without sequence specificity. Involved in DNA compaction. In Thermoplasma volcanium (strain ATCC 51530 / DSM 4299 / JCM 9571 / NBRC 15438 / GSS1), this protein is DNA/RNA-binding protein Alba.